The following is a 235-amino-acid chain: Protein GrpE (235 aa).

Polar residues predominate over residues 1–18 (MTDGNQKPDGNSGEQVTV). Disordered stretches follow at residues 1-50 (MTDG…DAAH) and 198-235 (ESVDDGTAVADTAENDQADQGNSADTLGEQAESEPSGS). Positions 19 to 35 (TDKRRIDPETGEVRHVP) are enriched in basic and acidic residues.

Belongs to the GrpE family. Homodimer.

The protein localises to the cytoplasm. Participates actively in the response to hyperosmotic and heat shock by preventing the aggregation of stress-denatured proteins, in association with DnaK and GrpE. It is the nucleotide exchange factor for DnaK and may function as a thermosensor. Unfolded proteins bind initially to DnaJ; upon interaction with the DnaJ-bound protein, DnaK hydrolyzes its bound ATP, resulting in the formation of a stable complex. GrpE releases ADP from DnaK; ATP binding to DnaK triggers the release of the substrate protein, thus completing the reaction cycle. Several rounds of ATP-dependent interactions between DnaJ, DnaK and GrpE are required for fully efficient folding. This Mycobacterium bovis (strain BCG / Pasteur 1173P2) protein is Protein GrpE.